Reading from the N-terminus, the 127-residue chain is MNPETMNKTLISISKWGKATGILFIIMGAITALSGAFFFLIGAVPGVLQIISGIFLMRSAREAGQMAEHNSGQSEDLMLENYAKFVKMQGIYLIVSIAVSILAIIAFFIFLMLGIADGLFSDTYSTY.

A helical transmembrane segment spans residues 91–113 (IYLIVSIAVSILAIIAFFIFLML).

It localises to the membrane. This is an uncharacterized protein from Bacillus subtilis (strain 168).